A 194-amino-acid polypeptide reads, in one-letter code: Imidazoleglycerol-phosphate dehydratase (194 aa).

The protein belongs to the imidazoleglycerol-phosphate dehydratase family.

It localises to the cytoplasm. It catalyses the reaction D-erythro-1-(imidazol-4-yl)glycerol 3-phosphate = 3-(imidazol-4-yl)-2-oxopropyl phosphate + H2O. The protein operates within amino-acid biosynthesis; L-histidine biosynthesis; L-histidine from 5-phospho-alpha-D-ribose 1-diphosphate: step 6/9. The chain is Imidazoleglycerol-phosphate dehydratase from Rubrobacter xylanophilus (strain DSM 9941 / JCM 11954 / NBRC 16129 / PRD-1).